The following is a 936-amino-acid chain: MutS protein homolog 4 (936 aa).

2 disordered regions span residues 1-83 (MLRP…AQGS) and 103-133 (GASSSSARDTNYPQTLKTPLSTGNPQRSGYK). Positions 7–20 (SSTSPSAPAVSPSS) are enriched in low complexity. Polar residues predominate over residues 35 to 55 (LQETPQSRPSVQVVSASTCPG). An ATP-binding site is contributed by 680–687 (GPNMSGKS).

It belongs to the DNA mismatch repair MutS family. As to quaternary structure, heterooligomer of MSH4 and MSH5. Highly expressed in testis. Also expressed in the ovary.

It localises to the chromosome. Involved in meiotic recombination. Required for reciprocal recombination and proper segregation of homologous chromosomes at meiosis. This is MutS protein homolog 4 (MSH4) from Homo sapiens (Human).